A 645-amino-acid polypeptide reads, in one-letter code: Beta-galactosidase (645 aa).

A substrate-binding site is contributed by arginine 102. Position 106 (cysteine 106) interacts with Zn(2+). Residue asparagine 140 participates in substrate binding. Glutamate 141 serves as the catalytic Proton donor. The Zn(2+) site is built by cysteine 150, cysteine 152, and cysteine 155. The active-site Nucleophile is the glutamate 312. Substrate is bound by residues tryptophan 320 and 360-363 (EQMH).

The protein belongs to the glycosyl hydrolase 42 family. As to quaternary structure, homotrimer.

The enzyme catalyses Hydrolysis of terminal non-reducing beta-D-galactose residues in beta-D-galactosides.. Its activity is regulated as follows. Inhibited by Cu(2+) and Fe(2+), and moderately activated by divalent cations such as Co(2+), Mn(2+) and Zn(2+). Considerably activated by dithiothreitol, beta-mercaptoethanol and cysteine. This is Beta-galactosidase from Thermus thermophilus.